The sequence spans 180 residues: MKLKFISMAVFSALTLGVATNASAVTTVNGGTVHFKGEVVNAACAVNTNSFDQTVNLGQVRSERLKVDGAKSNPVGFTIELNDCDSQVSAGAGIVFSGPAVTGKTDVLALQSSAAGSATNVGVQITDHTGKVVPLDGTASSTFTLTDGTNKIPFQAVYYATGQATAGIANADATFKVQYQ.

Residues 1-23 form the signal peptide; it reads MKLKFISMAVFSALTLGVATNAS. Cysteines 44 and 84 form a disulfide.

It belongs to the fimbrial protein family.

The protein localises to the fimbrium. Fimbriae (also called pili), polar filaments radiating from the surface of the bacterium to a length of 0.5-1.5 micrometers and numbering 100-300 per cell, enable bacteria to colonize the epithelium of specific host organs. The polypeptide is Type-1 fimbrial protein, C chain (pilC) (Escherichia coli O6:H1 (strain CFT073 / ATCC 700928 / UPEC)).